The sequence spans 388 residues: uncharacterized protein (388 aa).

[4Fe-4S] cluster-binding residues include C18, C24, C27, and C99. S-adenosyl-L-methionine-binding residues include Q212, E262, and N313. C343 acts as the Nucleophile in catalysis.

This sequence belongs to the class I-like SAM-binding methyltransferase superfamily. RNA M5U methyltransferase family.

This is an uncharacterized protein from Bdellovibrio bacteriovorus (strain ATCC 15356 / DSM 50701 / NCIMB 9529 / HD100).